The primary structure comprises 207 residues: Small ribosomal subunit protein uS4 (207 aa).

Residues 96-156 (SRLDNTVYRM…KKSHKQSRIR (61 aa)) form the S4 RNA-binding domain.

The protein belongs to the universal ribosomal protein uS4 family. In terms of assembly, part of the 30S ribosomal subunit. Contacts protein S5. The interaction surface between S4 and S5 is involved in control of translational fidelity.

One of the primary rRNA binding proteins, it binds directly to 16S rRNA where it nucleates assembly of the body of the 30S subunit. Its function is as follows. With S5 and S12 plays an important role in translational accuracy. The sequence is that of Small ribosomal subunit protein uS4 from Blochmanniella pennsylvanica (strain BPEN).